A 444-amino-acid chain; its full sequence is Methylenetetrahydrofolate--tRNA-(uracil-5-)-methyltransferase TrmFO (444 aa).

9 to 14 serves as a coordination point for FAD; the sequence is GAGMAG.

It belongs to the MnmG family. TrmFO subfamily. FAD is required as a cofactor.

It is found in the cytoplasm. The catalysed reaction is uridine(54) in tRNA + (6R)-5,10-methylene-5,6,7,8-tetrahydrofolate + NADH + H(+) = 5-methyluridine(54) in tRNA + (6S)-5,6,7,8-tetrahydrofolate + NAD(+). The enzyme catalyses uridine(54) in tRNA + (6R)-5,10-methylene-5,6,7,8-tetrahydrofolate + NADPH + H(+) = 5-methyluridine(54) in tRNA + (6S)-5,6,7,8-tetrahydrofolate + NADP(+). Functionally, catalyzes the folate-dependent formation of 5-methyl-uridine at position 54 (M-5-U54) in all tRNAs. In Cereibacter sphaeroides (strain ATCC 17029 / ATH 2.4.9) (Rhodobacter sphaeroides), this protein is Methylenetetrahydrofolate--tRNA-(uracil-5-)-methyltransferase TrmFO.